The primary structure comprises 339 residues: Undifferentiated embryonic cell transcription factor 1 (339 aa).

2 disordered regions span residues 1-62 and 144-270; these read MLLR…QRTP and MGLL…QVAP. Phosphoserine is present on residues Ser-15, Ser-18, Ser-48, and Ser-54. A compositionally biased stretch (basic residues) spans 154–170; it reads RVRRRSTGPGRPQRRGR. Composition is skewed to low complexity over residues 171-193 and 218-229; these read SSLS…PLAA and TSSPPLTSTDTL. A compositionally biased stretch (polar residues) spans 261-270; it reads GRASSPQVAP. The segment at 279–310 is leucine-zipper; the sequence is QTLTHLGDISTVLGPLRDQLSTLNQHVEHLRG.

Binds to the N-terminal region of ATF2. Associates with the TFIID complex through interaction with TBP. Phosphorylated. Expressed mainly in pluripotent cells with expression rapidly down-regulated upon cell differentiation.

The protein localises to the nucleus. Functionally, acts as a transcriptional coactivator of ATF2. This is Undifferentiated embryonic cell transcription factor 1 from Mus musculus (Mouse).